The primary structure comprises 259 residues: Ribosomal RNA small subunit methyltransferase A (259 aa).

S-adenosyl-L-methionine contacts are provided by N12, L14, G39, E60, D84, and N102.

This sequence belongs to the class I-like SAM-binding methyltransferase superfamily. rRNA adenine N(6)-methyltransferase family. RsmA subfamily.

Its subcellular location is the cytoplasm. It catalyses the reaction adenosine(1518)/adenosine(1519) in 16S rRNA + 4 S-adenosyl-L-methionine = N(6)-dimethyladenosine(1518)/N(6)-dimethyladenosine(1519) in 16S rRNA + 4 S-adenosyl-L-homocysteine + 4 H(+). Its function is as follows. Specifically dimethylates two adjacent adenosines (A1518 and A1519) in the loop of a conserved hairpin near the 3'-end of 16S rRNA in the 30S particle. May play a critical role in biogenesis of 30S subunits. The polypeptide is Ribosomal RNA small subunit methyltransferase A (Nitrosospira multiformis (strain ATCC 25196 / NCIMB 11849 / C 71)).